Here is a 539-residue protein sequence, read N- to C-terminus: Phosphoenolpyruvate carboxykinase (ATP) (539 aa).

3 residues coordinate substrate: arginine 61, tyrosine 195, and lysine 201. Residues lysine 201, histidine 220, and 238–246 (GLSGTGKTT) contribute to the ATP site. Positions 201 and 220 each coordinate Mn(2+). Aspartate 259 lines the Mn(2+) pocket. ATP-binding residues include glutamate 287, arginine 325, and threonine 450. Arginine 325 serves as a coordination point for substrate.

The protein belongs to the phosphoenolpyruvate carboxykinase (ATP) family. Mn(2+) serves as cofactor.

Its subcellular location is the cytoplasm. It catalyses the reaction oxaloacetate + ATP = phosphoenolpyruvate + ADP + CO2. Its pathway is carbohydrate biosynthesis; gluconeogenesis. Its function is as follows. Involved in the gluconeogenesis. Catalyzes the conversion of oxaloacetate (OAA) to phosphoenolpyruvate (PEP) through direct phosphoryl transfer between the nucleoside triphosphate and OAA. The chain is Phosphoenolpyruvate carboxykinase (ATP) from Methylobacterium radiotolerans (strain ATCC 27329 / DSM 1819 / JCM 2831 / NBRC 15690 / NCIMB 10815 / 0-1).